The sequence spans 141 residues: Ribosome-binding factor A (141 aa).

It belongs to the RbfA family. Monomer. Binds 30S ribosomal subunits, but not 50S ribosomal subunits or 70S ribosomes.

The protein localises to the cytoplasm. One of several proteins that assist in the late maturation steps of the functional core of the 30S ribosomal subunit. Associates with free 30S ribosomal subunits (but not with 30S subunits that are part of 70S ribosomes or polysomes). Required for efficient processing of 16S rRNA. May interact with the 5'-terminal helix region of 16S rRNA. The protein is Ribosome-binding factor A of Maricaulis maris (strain MCS10) (Caulobacter maris).